The sequence spans 443 residues: EGF-containing fibulin-like extracellular matrix protein 2 (443 aa).

Residues 1–25 (MLPFASCLPGSLLLWALLLLLLGAA) form the signal peptide. Positions 36–81 (YTECTDGYEWDADSQHCRDVNECLTIPEACKGEMKCINHYGGYLCL) constitute an EGF-like 1; atypical domain. 18 cysteine pairs are disulfide-bonded: C58–C121, C65–C80, C71–C109, C127–C140, C134–C149, C151–C162, C168–C177, C173–C186, C188–C201, C207–C217, C213–C226, C228–C241, C247–C258, C254–C267, C269–C281, C287–C300, C294–C309, and C315–C327. Positions 123 to 163 (DVDECAQALHDCRPSQDCHNLPGSYQCTCPDGYRKVGPECV) constitute an EGF-like 2; calcium-binding domain. In terms of domain architecture, EGF-like 3; calcium-binding spans 164 to 202 (DIDECRYRYCQHRCVNLPGSFRCQCEPGFQLGPNNRSCV). An N-linked (GlcNAc...) asparagine glycan is attached at N198. An EGF-like 4; calcium-binding domain is found at 203 to 242 (DVNECDMGAPCEQRCFNSYGTFLCRCNQGYELHRDGFSCS). Residues 243–282 (DIDECSYSSYLCQYRCVNEPGRFSCHCPQGYQLLATRLCQ) enclose the EGF-like 5; calcium-binding domain. The EGF-like 6; calcium-binding domain occupies 283 to 328 (DIDECETGAHQCSEAQTCVNFHGGYRCVDTNRCVEPYVQVSDNRCF). An N-linked (GlcNAc...) asparagine glycan is attached at N394.

It belongs to the fibulin family. As to quaternary structure, homodimer; disulfide-linked. Multimer; allows heparin binding. Monomer. Interacts with FBN1 (via N-terminal domain); this interaction inhibits EFEMP2 binding to LOX and ELN. Interacts with LOX (via propeptide); this interaction is strong and facilitates formation of ternary complexes with ELN during elastic fiber assembly; this interaction limits interaction of EFEMP2 with FBLN5. Interacts with PITX2. Interacts with ELN with moderate affinity; this interaction regulates ELN self-assembly maturation stage. Interacts with FBLN5 with moderate affinity. Interacts with LOXL1 (via propeptide), LTBP1 and TGFB1 stronger than with LOXL2 and LTBP3. Interacts with PCOLCE. Interacts with collagen type IV trimer (COL4A1-COL4A1-COL4A2), NID2 and moderately with COL15A1-derived endostatin. Interacts with EMILIN1; this interaction promotes the incorporation of EFEMP2 into the extracellular matrix. Interacts with LTBP4; the LTBP4 long form (LTBP4L) has a stronger binding affinity than the LTBP4 short form and the LTBP4 long form promotes fibrillar deposition of EFEMP2. In terms of processing, N-glycosylated; contains mostly complex-type glycans. Not O-glycosylated. Cleaved by ELANE; produces a 50-55 kDa fragment. Cleaved by MMP2 and MMP9; produces several fragments.

It localises to the secreted. The protein localises to the extracellular space. Its subcellular location is the extracellular matrix. It is found in the basement membrane. In terms of biological role, plays a crucial role in elastic fiber formation in tissue, and in the formation of ultrastructural connections between elastic laminae and smooth muscle cells in the aorta, therefore participates in terminal differentiation and maturation of smooth muscle cell (SMC) and in the mechanical properties and wall integrity maintenance of the aorta. In addition, is involved in the control of collagen fibril assembly in tissue throught proteolytic activation of LOX leading to cross- linking of collagen and elastin. Also promotes ELN coacervation and participates in the deposition of ELN coacervates on to microfibrils but also regulates ELN cross- linking through LOX interaction. Moreover adheres to the cells through heparin binding in a calcium-dependent manner and regulates vascularlar smooth muscle cells proliferation through angiotensin signaling. The polypeptide is EGF-containing fibulin-like extracellular matrix protein 2 (Cricetulus griseus (Chinese hamster)).